A 332-amino-acid polypeptide reads, in one-letter code: GTP 3',8-cyclase (332 aa).

Positions 9 to 220 (RFARKVDYLR…DQVRERIAER (212 aa)) constitute a Radical SAM core domain. Arginine 18 lines the GTP pocket. Positions 25 and 29 each coordinate [4Fe-4S] cluster. Tyrosine 31 lines the S-adenosyl-L-methionine pocket. Residue cysteine 32 participates in [4Fe-4S] cluster binding. A GTP-binding site is contributed by arginine 67. Residue glycine 71 coordinates S-adenosyl-L-methionine. Threonine 98 serves as a coordination point for GTP. Serine 122 serves as a coordination point for S-adenosyl-L-methionine. A GTP-binding site is contributed by lysine 159. Position 193 (methionine 193) interacts with S-adenosyl-L-methionine. Residues cysteine 258 and cysteine 261 each contribute to the [4Fe-4S] cluster site. Position 263–265 (263–265 (RVR)) interacts with GTP. Cysteine 275 is a binding site for [4Fe-4S] cluster.

The protein belongs to the radical SAM superfamily. MoaA family. As to quaternary structure, monomer and homodimer. [4Fe-4S] cluster is required as a cofactor.

The enzyme catalyses GTP + AH2 + S-adenosyl-L-methionine = (8S)-3',8-cyclo-7,8-dihydroguanosine 5'-triphosphate + 5'-deoxyadenosine + L-methionine + A + H(+). It participates in cofactor biosynthesis; molybdopterin biosynthesis. Its function is as follows. Catalyzes the cyclization of GTP to (8S)-3',8-cyclo-7,8-dihydroguanosine 5'-triphosphate. This is GTP 3',8-cyclase from Pseudomonas savastanoi pv. phaseolicola (strain 1448A / Race 6) (Pseudomonas syringae pv. phaseolicola (strain 1448A / Race 6)).